The following is a 328-amino-acid chain: Trans-O-hydroxybenzylidenepyruvate hydratase-aldolase (328 aa).

This sequence belongs to the DapA family. As to quaternary structure, homotrimer.

The enzyme catalyses (3E)-4-(2-hydroxyphenyl)-2-oxobut-3-enoate + H2O = salicylaldehyde + pyruvate. It participates in aromatic compound metabolism; naphthalene degradation. Its activity is regulated as follows. Inhibited bye p-chloromercuribenzoate and salicylaldehyde. Activated by salicylate. Functionally, involved in the naphthalene and naphthalenesulfonate catabolic pathway. Catalyzes the transformation of trans-O-hydroxybenzylidenepyruvate (THBPA) to salicylaldehyde and pyruvate. The reaction is reversible. Can also use 2,4-dihydroxybenzalpyruvate (2,4-DHBP) and 2,6-dihydroxybenzalpyruvate (2,6-DHBP). This chain is Trans-O-hydroxybenzylidenepyruvate hydratase-aldolase (nsaE), found in Sphingobium xenophagum.